We begin with the raw amino-acid sequence, 222 residues long: Small ribosomal subunit protein uS3 (222 aa).

Residues 39 to 108 (IRRHIKEKLY…TISLDIKEIK (70 aa)) form the KH type-2 domain.

Belongs to the universal ribosomal protein uS3 family. As to quaternary structure, part of the 30S ribosomal subunit. Forms a tight complex with proteins S10 and S14.

Binds the lower part of the 30S subunit head. Binds mRNA in the 70S ribosome, positioning it for translation. The protein is Small ribosomal subunit protein uS3 of Caldicellulosiruptor bescii (strain ATCC BAA-1888 / DSM 6725 / KCTC 15123 / Z-1320) (Anaerocellum thermophilum).